Reading from the N-terminus, the 893-residue chain is Translation initiation factor IF-2 (893 aa).

2 disordered regions span residues Lys51–Glu203 and Glu216–His300. 3 stretches are compositionally biased toward basic and acidic residues: residues Ala102–Glu203, Glu216–Tyr238, and His245–Pro261. The region spanning Gly392 to Thr561 is the tr-type G domain. Residues Gly401–Thr408 are G1. A GTP-binding site is contributed by Gly401–Thr408. Residues Gly426–His430 are G2. The G3 stretch occupies residues Asp447 to Gly450. Residues Asp447 to His451 and Asn501 to Asp504 contribute to the GTP site. The segment at Asn501–Asp504 is G4. The segment at Ser537–Lys539 is G5.

This sequence belongs to the TRAFAC class translation factor GTPase superfamily. Classic translation factor GTPase family. IF-2 subfamily.

It localises to the cytoplasm. In terms of biological role, one of the essential components for the initiation of protein synthesis. Protects formylmethionyl-tRNA from spontaneous hydrolysis and promotes its binding to the 30S ribosomal subunits. Also involved in the hydrolysis of GTP during the formation of the 70S ribosomal complex. The sequence is that of Translation initiation factor IF-2 from Aliivibrio fischeri (strain MJ11) (Vibrio fischeri).